Reading from the N-terminus, the 260-residue chain is NH(3)-dependent NAD(+) synthetase (260 aa).

G31 to S38 provides a ligand contact to ATP. A Mg(2+)-binding site is contributed by D37. R112 lines the deamido-NAD(+) pocket. T132 contacts ATP. Residue E137 participates in Mg(2+) binding. ATP-binding residues include K161 and S183.

It belongs to the NAD synthetase family. Homodimer.

It catalyses the reaction deamido-NAD(+) + NH4(+) + ATP = AMP + diphosphate + NAD(+) + H(+). The protein operates within cofactor biosynthesis; NAD(+) biosynthesis; NAD(+) from deamido-NAD(+) (ammonia route): step 1/1. Its function is as follows. Catalyzes the ATP-dependent amidation of deamido-NAD to form NAD. Uses ammonia as a nitrogen source. In Helicobacter pylori (strain P12), this protein is NH(3)-dependent NAD(+) synthetase.